The chain runs to 116 residues: Aspartate 1-decarboxylase (116 aa).

The active-site Schiff-base intermediate with substrate; via pyruvic acid is the Ser25. Ser25 is modified (pyruvic acid (Ser)). Thr57 lines the substrate pocket. Tyr58 functions as the Proton donor in the catalytic mechanism. Residue Gly73–Ala75 coordinates substrate.

It belongs to the PanD family. Heterooctamer of four alpha and four beta subunits. The cofactor is pyruvate. Post-translationally, is synthesized initially as an inactive proenzyme, which is activated by self-cleavage at a specific serine bond to produce a beta-subunit with a hydroxyl group at its C-terminus and an alpha-subunit with a pyruvoyl group at its N-terminus.

The protein resides in the cytoplasm. The catalysed reaction is L-aspartate + H(+) = beta-alanine + CO2. It participates in cofactor biosynthesis; (R)-pantothenate biosynthesis; beta-alanine from L-aspartate: step 1/1. Its function is as follows. Catalyzes the pyruvoyl-dependent decarboxylation of aspartate to produce beta-alanine. The polypeptide is Aspartate 1-decarboxylase (Christiangramia forsetii (strain DSM 17595 / CGMCC 1.15422 / KT0803) (Gramella forsetii)).